The following is a 243-amino-acid chain: Probable 6-oxopurine nucleoside phosphorylase (243 aa).

Residues Thr8 and 48–49 each bind phosphate; that span reads RH. Met174 lines the substrate pocket. A phosphate-binding site is contributed by Thr175. 198 to 200 is a substrate binding site; that stretch reads NYA.

The protein belongs to the PNP/MTAP phosphorylase family. MTAP subfamily. In terms of assembly, homohexamer. Dimer of a homotrimer.

It carries out the reaction a purine D-ribonucleoside + phosphate = a purine nucleobase + alpha-D-ribose 1-phosphate. It functions in the pathway purine metabolism; purine nucleoside salvage. Purine nucleoside phosphorylase which is highly specific for 6-oxopurine nucleosides. Cleaves guanosine or inosine to respective bases and sugar-1-phosphate molecules. Involved in purine salvage. In Archaeoglobus fulgidus (strain ATCC 49558 / DSM 4304 / JCM 9628 / NBRC 100126 / VC-16), this protein is Probable 6-oxopurine nucleoside phosphorylase.